Consider the following 119-residue polypeptide: Non-structural protein 3b (119 aa).

Residues 3-79 (YVSLLNQVWQ…AARKVCLRLQ (77 aa)) enclose the DRBM domain.

As to quaternary structure, interacts with host RUNX1 isoform b.

It is found in the host nucleus. The protein localises to the host nucleolus. Its subcellular location is the host mitochondrion. In terms of biological role, induces host cell G0/G1 arrest and apoptosis. This is Non-structural protein 3b from Pipistrellus abramus (Japanese pipistrelle).